We begin with the raw amino-acid sequence, 939 residues long: Isoleucine--tRNA ligase (939 aa).

The 'HIGH' region motif lies at 57–67 (PYANGHIHLGH). Glutamate 561 contributes to the L-isoleucyl-5'-AMP binding site. The 'KMSKS' region signature appears at 602-606 (KMSKS). ATP is bound at residue lysine 605. Zn(2+)-binding residues include cysteine 903, cysteine 906, cysteine 923, and cysteine 926.

Belongs to the class-I aminoacyl-tRNA synthetase family. IleS type 1 subfamily. As to quaternary structure, monomer. Zn(2+) is required as a cofactor.

It localises to the cytoplasm. It catalyses the reaction tRNA(Ile) + L-isoleucine + ATP = L-isoleucyl-tRNA(Ile) + AMP + diphosphate. In terms of biological role, catalyzes the attachment of isoleucine to tRNA(Ile). As IleRS can inadvertently accommodate and process structurally similar amino acids such as valine, to avoid such errors it has two additional distinct tRNA(Ile)-dependent editing activities. One activity is designated as 'pretransfer' editing and involves the hydrolysis of activated Val-AMP. The other activity is designated 'posttransfer' editing and involves deacylation of mischarged Val-tRNA(Ile). The sequence is that of Isoleucine--tRNA ligase from Desulfotalea psychrophila (strain LSv54 / DSM 12343).